We begin with the raw amino-acid sequence, 335 residues long: Phospho-N-acetylmuramoyl-pentapeptide-transferase (335 aa).

The next 9 helical transmembrane spans lie at 2–22 (PPLF…LILV), 55–75 (IPTA…LLLL), 77–97 (CNLW…ALGW), 118–137 (FFIQ…IAYG), 153–173 (LPHC…AIVG), 193–213 (VIAC…WAFI), 238–258 (IFMG…CAVL), 263–283 (FMLL…ILQV), and 313–333 (VVRN…FAVF).

This sequence belongs to the glycosyltransferase 4 family. MraY subfamily. The cofactor is Mg(2+).

It is found in the cell inner membrane. The enzyme catalyses UDP-N-acetyl-alpha-D-muramoyl-L-alanyl-gamma-D-glutamyl-meso-2,6-diaminopimeloyl-D-alanyl-D-alanine + di-trans,octa-cis-undecaprenyl phosphate = di-trans,octa-cis-undecaprenyl diphospho-N-acetyl-alpha-D-muramoyl-L-alanyl-D-glutamyl-meso-2,6-diaminopimeloyl-D-alanyl-D-alanine + UMP. Its pathway is cell wall biogenesis; peptidoglycan biosynthesis. In terms of biological role, catalyzes the initial step of the lipid cycle reactions in the biosynthesis of the cell wall peptidoglycan: transfers peptidoglycan precursor phospho-MurNAc-pentapeptide from UDP-MurNAc-pentapeptide onto the lipid carrier undecaprenyl phosphate, yielding undecaprenyl-pyrophosphoryl-MurNAc-pentapeptide, known as lipid I. The chain is Phospho-N-acetylmuramoyl-pentapeptide-transferase from Chlamydia muridarum (strain MoPn / Nigg).